The primary structure comprises 316 residues: N-acetyl-gamma-glutamyl-phosphate reductase (316 aa).

C136 is a catalytic residue.

Belongs to the NAGSA dehydrogenase family. Type 1 subfamily.

It is found in the cytoplasm. It carries out the reaction N-acetyl-L-glutamate 5-semialdehyde + phosphate + NADP(+) = N-acetyl-L-glutamyl 5-phosphate + NADPH + H(+). Its pathway is amino-acid biosynthesis; L-arginine biosynthesis; N(2)-acetyl-L-ornithine from L-glutamate: step 3/4. Functionally, catalyzes the NADPH-dependent reduction of N-acetyl-5-glutamyl phosphate to yield N-acetyl-L-glutamate 5-semialdehyde. The protein is N-acetyl-gamma-glutamyl-phosphate reductase of Xanthomonas euvesicatoria pv. vesicatoria (strain 85-10) (Xanthomonas campestris pv. vesicatoria).